Reading from the N-terminus, the 1458-residue chain is Anaphase-promoting complex subunit 1 (1458 aa).

The tract at residues 186–210 is disordered; the sequence is QSIKSSRNRRRESSFSREKNPDLTR. The segment covering 196 to 210 has biased composition (basic and acidic residues); it reads RESSFSREKNPDLTR. PC repeat units follow at residues 873–895, 959–982, 1006–1024, and 1099–1124; these read GLLL…KLLS, AAGF…SDLK, GAIM…LEVA, and GICF…INFL.

The protein belongs to the APC1 family. As to quaternary structure, the APC/C is composed of at least 13 subunits: apc1, apc2, nuc2, apc4, apc5, cut9, apc8, apc10, apc11, hcn1, apc13, apc14 and apc15.

Its function is as follows. Component of the anaphase-promoting complex/cyclosome (APC/C), a cell cycle-regulated E3 ubiquitin-protein ligase complex that controls progression through mitosis and the G1 phase of the cell cycle. The APC/C is thought to confer substrate specificity and, in the presence of ubiquitin-conjugating E2 enzymes, it catalyzes the formation of protein-ubiquitin conjugates that are subsequently degraded by the 26S proteasome. Mutations to this protein prevent the exit from mitosis. This chain is Anaphase-promoting complex subunit 1 (cut4), found in Schizosaccharomyces pombe (strain 972 / ATCC 24843) (Fission yeast).